The following is a 241-amino-acid chain: Pyrroloquinoline-quinone synthase (241 aa).

This sequence belongs to the PqqC family.

It catalyses the reaction 6-(2-amino-2-carboxyethyl)-7,8-dioxo-1,2,3,4,7,8-hexahydroquinoline-2,4-dicarboxylate + 3 O2 = pyrroloquinoline quinone + 2 H2O2 + 2 H2O + H(+). It functions in the pathway cofactor biosynthesis; pyrroloquinoline quinone biosynthesis. Its function is as follows. Ring cyclization and eight-electron oxidation of 3a-(2-amino-2-carboxyethyl)-4,5-dioxo-4,5,6,7,8,9-hexahydroquinoline-7,9-dicarboxylic-acid to PQQ. The polypeptide is Pyrroloquinoline-quinone synthase (Ruegeria pomeroyi (strain ATCC 700808 / DSM 15171 / DSS-3) (Silicibacter pomeroyi)).